The following is a 262-amino-acid chain: Phosphonates import ATP-binding protein PhnC (262 aa).

Residues 5-253 (IRVEKLAKTF…RFDHLYRSIN (249 aa)) form the ABC transporter domain. 37–44 (GPSGSGKS) is a binding site for ATP.

It belongs to the ABC transporter superfamily. Phosphonates importer (TC 3.A.1.9.1) family. In terms of assembly, the complex is composed of two ATP-binding proteins (PhnC), two transmembrane proteins (PhnE) and a solute-binding protein (PhnD).

The protein localises to the cell inner membrane. The catalysed reaction is phosphonate(out) + ATP + H2O = phosphonate(in) + ADP + phosphate + H(+). Part of the ABC transporter complex PhnCDE involved in phosphonates import. Responsible for energy coupling to the transport system. This Escherichia coli (strain UTI89 / UPEC) protein is Phosphonates import ATP-binding protein PhnC.